The following is a 97-amino-acid chain: UPF0125 protein plu3376 (97 aa).

Belongs to the UPF0125 (RnfH) family.

The chain is UPF0125 protein plu3376 from Photorhabdus laumondii subsp. laumondii (strain DSM 15139 / CIP 105565 / TT01) (Photorhabdus luminescens subsp. laumondii).